Reading from the N-terminus, the 1453-residue chain is Clustered mitochondria protein homolog (1453 aa).

A compositionally biased stretch (polar residues) spans 78 to 101 (LSENGQENSPHNSDSGHETSSPDS). The segment at 78-110 (LSENGQENSPHNSDSGHETSSPDSPLTPIEEGA) is disordered. A Clu domain is found at 439–690 (EDGIRAEDCT…RTFPPDVNYL (252 aa)). Residues 979-1015 (PLTPSNEEVSMPINSVKKSRSSKRRKQISSGGKENDD) are disordered. Residues 995–1005 (KKSRSSKRRKQ) are compositionally biased toward basic residues. 2 TPR repeats span residues 1235-1268 (AEIDGNIGVILYAVQEFDDALKFLQNALKLHQIY) and 1277-1310 (ALIYHLLARTYSCRGDFRTALQMEKETFTIYSKT).

Belongs to the CLU family.

Its subcellular location is the cytoplasm. In terms of biological role, mRNA-binding protein involved in proper cytoplasmic distribution of mitochondria. In Brugia malayi (Filarial nematode worm), this protein is Clustered mitochondria protein homolog.